Consider the following 366-residue polypeptide: Peptide chain release factor 2 (366 aa).

Gln253 carries the N5-methylglutamine modification.

The protein belongs to the prokaryotic/mitochondrial release factor family. Methylated by PrmC. Methylation increases the termination efficiency of RF2.

It localises to the cytoplasm. Functionally, peptide chain release factor 2 directs the termination of translation in response to the peptide chain termination codons UGA and UAA. The chain is Peptide chain release factor 2 from Yersinia pestis.